A 396-amino-acid chain; its full sequence is Elongation factor Tu (396 aa).

A tr-type G domain is found at 11–205 (KPHVNIGTIG…VVDEYIPTPE (195 aa)). The G1 stretch occupies residues 20–27 (GHVDHGKT). Position 20-27 (20-27 (GHVDHGKT)) interacts with GTP. Mg(2+) is bound at residue threonine 27. The segment at 61–65 (GITIN) is G2. The interval 82–85 (DAPG) is G3. GTP is bound by residues 82–86 (DAPGH) and 137–140 (NKCD). The G4 stretch occupies residues 137–140 (NKCD). The segment at 175–177 (SAL) is G5.

Belongs to the TRAFAC class translation factor GTPase superfamily. Classic translation factor GTPase family. EF-Tu/EF-1A subfamily. In terms of assembly, monomer.

Its subcellular location is the cytoplasm. The enzyme catalyses GTP + H2O = GDP + phosphate + H(+). Its function is as follows. GTP hydrolase that promotes the GTP-dependent binding of aminoacyl-tRNA to the A-site of ribosomes during protein biosynthesis. The chain is Elongation factor Tu from Lactobacillus delbrueckii subsp. bulgaricus (strain ATCC 11842 / DSM 20081 / BCRC 10696 / JCM 1002 / NBRC 13953 / NCIMB 11778 / NCTC 12712 / WDCM 00102 / Lb 14).